The following is a 152-amino-acid chain: Acidic phospholipase A2 57 (152 aa).

The N-terminal stretch at 1 to 21 is a signal peptide; it reads MYPAHLLGLLAVCVSLLGAAS. Positions 22-27 are excised as a propeptide; it reads IPPLPL. 7 cysteine pairs are disulfide-bonded: Cys38–Cys104, Cys54–Cys151, Cys56–Cys72, Cys71–Cys132, Cys78–Cys125, Cys88–Cys118, and Cys111–Cys123. Ca(2+) is bound by residues Tyr55, Gly57, and Gly59. Residue His75 is part of the active site. Position 76 (Asp76) interacts with Ca(2+). Residue Asp126 is part of the active site.

It belongs to the phospholipase A2 family. Group I subfamily. D49 sub-subfamily. Ca(2+) serves as cofactor. Expressed by the venom gland.

It is found in the secreted. It carries out the reaction a 1,2-diacyl-sn-glycero-3-phosphocholine + H2O = a 1-acyl-sn-glycero-3-phosphocholine + a fatty acid + H(+). In terms of biological role, PLA2 catalyzes the calcium-dependent hydrolysis of the 2-acyl groups in 3-sn-phosphoglycerides. The sequence is that of Acidic phospholipase A2 57 from Hydrophis hardwickii (Hardwick's spine-bellied seasnake).